The sequence spans 229 residues: Urease accessory protein UreF (229 aa).

It belongs to the UreF family. As to quaternary structure, ureD, UreF and UreG form a complex that acts as a GTP-hydrolysis-dependent molecular chaperone, activating the urease apoprotein by helping to assemble the nickel containing metallocenter of UreC. The UreE protein probably delivers the nickel.

It localises to the cytoplasm. Functionally, required for maturation of urease via the functional incorporation of the urease nickel metallocenter. The polypeptide is Urease accessory protein UreF (Methylobacterium radiotolerans (strain ATCC 27329 / DSM 1819 / JCM 2831 / NBRC 15690 / NCIMB 10815 / 0-1)).